Consider the following 296-residue polypeptide: Thymidylate synthase (296 aa).

DUMP is bound by residues Arg24 and Arg151–Arg152. The Nucleophile role is filled by Cys171. DUMP contacts are provided by residues Arg197–Asp200, Asn208, and His238–Tyr240. Asp200 lines the (6R)-5,10-methylene-5,6,7,8-tetrahydrofolate pocket.

This sequence belongs to the thymidylate synthase family. Homodimer.

It catalyses the reaction dUMP + (6R)-5,10-methylene-5,6,7,8-tetrahydrofolate = 7,8-dihydrofolate + dTMP. It functions in the pathway pyrimidine metabolism; dTTP biosynthesis. The sequence is that of Thymidylate synthase (tms1) from Agaricus bisporus (White button mushroom).